The sequence spans 242 residues: Small ribosomal subunit protein uS2 (242 aa).

This sequence belongs to the universal ribosomal protein uS2 family.

The polypeptide is Small ribosomal subunit protein uS2 (Shewanella baltica (strain OS223)).